A 336-amino-acid polypeptide reads, in one-letter code: DNA-directed RNA polymerase subunit alpha (336 aa).

The segment at 1–232 is alpha N-terminal domain (alpha-NTD); that stretch reads MIQKNWQELI…DQLGLFVNFE (232 aa). Positions 248–336 are alpha C-terminal domain (alpha-CTD); that stretch reads FNPALLKKVD…ELAKRYEDQY (89 aa).

Belongs to the RNA polymerase alpha chain family. In terms of assembly, homodimer. The RNAP catalytic core consists of 2 alpha, 1 beta, 1 beta' and 1 omega subunit. When a sigma factor is associated with the core the holoenzyme is formed, which can initiate transcription.

It catalyses the reaction RNA(n) + a ribonucleoside 5'-triphosphate = RNA(n+1) + diphosphate. DNA-dependent RNA polymerase catalyzes the transcription of DNA into RNA using the four ribonucleoside triphosphates as substrates. In Chelativorans sp. (strain BNC1), this protein is DNA-directed RNA polymerase subunit alpha.